The sequence spans 356 residues: Protein RecA (356 aa).

69–76 (GPESSGKT) is a binding site for ATP.

Belongs to the RecA family.

Its subcellular location is the cytoplasm. Functionally, can catalyze the hydrolysis of ATP in the presence of single-stranded DNA, the ATP-dependent uptake of single-stranded DNA by duplex DNA, and the ATP-dependent hybridization of homologous single-stranded DNAs. It interacts with LexA causing its activation and leading to its autocatalytic cleavage. The polypeptide is Protein RecA (Gloeothece citriformis (strain PCC 7424) (Cyanothece sp. (strain PCC 7424))).